The sequence spans 176 residues: Ribosome maturation factor RimM (176 aa).

The PRC barrel domain occupies 101 to 173 (EGEYYHYRLI…RMVVDLPEGL (73 aa)).

Belongs to the RimM family. Binds ribosomal protein uS19.

It is found in the cytoplasm. An accessory protein needed during the final step in the assembly of 30S ribosomal subunit, possibly for assembly of the head region. Essential for efficient processing of 16S rRNA. May be needed both before and after RbfA during the maturation of 16S rRNA. It has affinity for free ribosomal 30S subunits but not for 70S ribosomes. This Syntrophobacter fumaroxidans (strain DSM 10017 / MPOB) protein is Ribosome maturation factor RimM.